We begin with the raw amino-acid sequence, 178 residues long: Methylmalonyl-CoA epimerase, mitochondrial (178 aa).

The transit peptide at 1-38 directs the protein to the mitochondrion; that stretch reads MRRVVKAAALAAGATGLFSRVQTSVAIGRSFSTPQSQF. Positions 49-178 constitute a VOC domain; that stretch reads RLNHVAVAVP…GGVLVELEQA (130 aa). Histidine 52 serves as a coordination point for Co(2+). Lysine 116 bears the N6-succinyllysine mark. Histidine 124 is a binding site for Co(2+). The residue at position 152 (lysine 152) is an N6-acetyllysine; alternate. An N6-succinyllysine; alternate modification is found at lysine 152. Glutamate 174 contributes to the Co(2+) binding site.

The protein belongs to the methylmalonyl-CoA epimerase family.

Its subcellular location is the mitochondrion. The catalysed reaction is (R)-methylmalonyl-CoA = (S)-methylmalonyl-CoA. Its function is as follows. Methylmalonyl-CoA epimerase involved in propionyl-CoA metabolism. In Mus musculus (Mouse), this protein is Methylmalonyl-CoA epimerase, mitochondrial.